The chain runs to 317 residues: Thymidylate synthase (317 aa).

Residues Arg-40 and 167 to 168 contribute to the dUMP site; that span reads RR. Cys-187 serves as the catalytic Nucleophile. DUMP is bound by residues 216–219, Asn-227, and 257–259; these read RSCD and HVY. Asp-219 is a (6R)-5,10-methylene-5,6,7,8-tetrahydrofolate binding site.

Belongs to the thymidylate synthase family. Homodimer.

It catalyses the reaction dUMP + (6R)-5,10-methylene-5,6,7,8-tetrahydrofolate = 7,8-dihydrofolate + dTMP. It participates in pyrimidine metabolism; dTTP biosynthesis. This is Thymidylate synthase (TMP1) from Cryptococcus neoformans var. neoformans serotype D (strain B-3501A) (Filobasidiella neoformans).